Here is a 226-residue protein sequence, read N- to C-terminus: Charged multivesicular body protein 4 (226 aa).

Residues 22 to 88 adopt a coiled-coil conformation; that stretch reads IQKLRETENM…DGTLSTIEMQ (67 aa). Residues 169–226 form a disordered region; that stretch reads QENFDKEIIGIPEPTPTLPEAPTEDLPEKAKEKKKATTTTAVEDDDDPDMKQLLSWSN.

Belongs to the SNF7 family. As to quaternary structure, homopolymer; forms elongated striated filaments of uniform ~10nm width. Monomers interact in a staggered arrangement mediated by complementary charged electrostatic surfaces. Interacts with l(2)gd1 (via DM14 domains 1 and 3); the interaction is direct and blocks access to the surface involved in homopolymerization. This interaction may be required for the ESCRT-III complex role in multivesicular body formation. Expressed at considerably higher levels in testis than in ovary. Expressed in midgut, eye, mouthparts and male accessory gland.

The protein resides in the endosome. The protein localises to the multivesicular body. It is found in the midbody. With respect to regulation, may be regulated by aurB/Aurora kinase B-dependent phosphorylation. In terms of biological role, probable core polymerisation component of the endosomal sorting required for transport (ESCRT) III complex involved in multiple cellular processes requiring the outward bending of membranes, including vesicle budding, membrane repair and cytokinesis. The ESCRT pathway involves 4 complexes (ESCRT-0, -I, -II and -III) that sequentially assemble on the cytoplasmic side of membranes and induce membrane remodeling, budding and scission. As part of the ESCRT-III complex, involved in the budding of intraluminal vesicles (ILVs) into endosomes to form multivesicular bodies (MVBs), which target their contents for degradation via the endolysosomal pathway. Involved in regulation of signal transduction pathways, including the Notch and BMP/decapentaplegic (dpp) pathways, by sequestering the intracellular domains of activated receptors into ILVs, isolating them from the cytoplasm and targeting them for lysosomal degradation. Involved in targeting ubiquitilated proteins, such as mono-ubiquitilanated N/Notch, to MVBs for degradation. Plays a role in wing development by regulating Notch signaling. Involved in abscission of germline cells during oogenesis. Involved in spermiogenesis. Required for efficient cytoplasmic isolation and abscission during cytokinesis of epithelial sensory organ precursor cells. May be involved in septate junction remodeling and maintenance. The sequence is that of Charged multivesicular body protein 4 from Drosophila melanogaster (Fruit fly).